Here is a 2179-residue protein sequence, read N- to C-terminus: Probable inactive serine/threonine-protein kinase lvsG (2179 aa).

The segment at 100 to 167 (DHDLNKNKNN…TSISLNDLNS (68 aa)) is disordered. Composition is skewed to low complexity over residues 106–121 (NKNN…NNSG) and 141–159 (LSPS…LSTS). The stretch at 216–256 (LYERSLKTSQQQQQQQQQQFKFQPNETLSLWEYFDEINSPP) is one WD 1 repeat. Disordered regions lie at residues 281–300 (LDNK…NSQS), 523–556 (DNDN…TVGW), 589–621 (DSMG…NSGK), 778–801 (KSLK…QPQF), 844–959 (NNHH…NKPS), 1033–1055 (AQQQ…SKQL), 1079–1153 (GISK…STTD), 1339–1362 (NHSN…KNGS), and 1785–1807 (TTTT…PNSL). The BEACH domain maps to 463–801 (YHQPLENQFE…QQQTQQQPQF (339 aa)). A compositionally biased stretch (low complexity) spans 534 to 548 (NSSSSNNNNNNNNED). The segment covering 590–602 (SMGGGIGSIGSTG) has biased composition (gly residues). Low complexity-rich tracts occupy residues 783-800 (QRQQ…QQPQ), 853-943 (NSNI…GVNN), 1033-1047 (AQQQ…QQQA), and 1084-1098 (TTNA…TNSN). Residues 1021–1049 (LQQQLQQQQQQQAQQQQSQQQSQQQQANS) adopt a coiled-coil conformation. A Protein kinase domain is found at 1064–1400 (ESMIKKYSNG…VNELLSSSLF (337 aa)). Positions 1099–1122 (MGDSIGNNITSPPSPTSLKDSSSI) are enriched in polar residues. The segment covering 1123–1134 (QQQQQQQQQQQQ) has biased composition (low complexity). Residues 1135–1153 (NSESTRPITPPNVSNSTTD) show a composition bias toward polar residues. Low complexity-rich tracts occupy residues 1339–1360 (NHSN…NNKN) and 1785–1801 (TTTT…NNNN). 6 WD repeats span residues 1864–1903 (EHNA…SLTT), 1906–1942 (QHMH…KVNV), 1945–1983 (EPTG…LTHE), 2007–2048 (SNSN…ILEQ), 2052–2089 (HHDS…PIIS), and 2149–2179 (PKQS…KICQ).

It belongs to the protein kinase superfamily. Ser/Thr protein kinase family.

The polypeptide is Probable inactive serine/threonine-protein kinase lvsG (lvsG) (Dictyostelium discoideum (Social amoeba)).